A 146-amino-acid chain; its full sequence is MORN repeat-containing protein 4 (146 aa).

4 MORN repeats span residues 16–38 (YRGE…DGGT), 39–61 (YLGH…DGSR), 62–84 (YEGE…DNMT), and 85–107 (FEGE…DGSH).

Interacts with MYO3A.

It is found in the cytoplasm. Its subcellular location is the cell projection. It localises to the filopodium tip. The protein localises to the stereocilium. Its function is as follows. Plays a role in promoting axonal degeneration following neuronal injury by toxic insult or trauma. The protein is MORN repeat-containing protein 4 (Morn4) of Mus musculus (Mouse).